The primary structure comprises 508 residues: MGLPWYRVHTVVLNDPGRLLSVHIMHTALVAGWAGSMALYELAVFDPSDPVLDPMWRQGMFVIPFMTRLGITNSWGGWSITGGTITNPGIWSYEGVAGAHIVFSGLCFLAAIWHWVYWDLEIFCDERTGKPSLDLPKIFGIHLFLSGVACFGFGAFHVTGLYGPGIWVSDPCGLTGKVQPVNPAWGVEGFDPFVPGGIASHHIAAGTLGILAGLFHLSVRPPQRLYKGLRMGNIETVLSSSIAAVFFAAFVVAGTMWYGSATTPIELFGPTRYQWDQGYFQQEIYRRVSAGLAENQSLSEAWSKIPEKLAFYDYIGNNPAKGGLFRAGSMDNGDGIAVGWLGHPIFRDKDGRELFVRRMPTFFETFPVVLVDGDGIVRADVPFRRAESKYSVEQVGVTVEFYGGELNGVSYSDPATVKKYARRAQLGEIFELDRATLKSDGVFRSSPRGWFTFGHASFALLFFFGHIWHGARTLFRDVFAGIDPDLDAQVEFGAFQKLGDPTTRRQVV.

The next 6 membrane-spanning stretches (helical) occupy residues S21–S36, I101–W115, G140–F156, I203–S218, V237–V252, and S457–R472.

Belongs to the PsbB/PsbC family. PsbB subfamily. PSII is composed of 1 copy each of membrane proteins PsbA, PsbB, PsbC, PsbD, PsbE, PsbF, PsbH, PsbI, PsbJ, PsbK, PsbL, PsbM, PsbT, PsbX, PsbY, PsbZ, Psb30/Ycf12, at least 3 peripheral proteins of the oxygen-evolving complex and a large number of cofactors. It forms dimeric complexes. It depends on Binds multiple chlorophylls. PSII binds additional chlorophylls, carotenoids and specific lipids. as a cofactor.

It is found in the plastid. Its subcellular location is the chloroplast thylakoid membrane. In terms of biological role, one of the components of the core complex of photosystem II (PSII). It binds chlorophyll and helps catalyze the primary light-induced photochemical processes of PSII. PSII is a light-driven water:plastoquinone oxidoreductase, using light energy to abstract electrons from H(2)O, generating O(2) and a proton gradient subsequently used for ATP formation. In Gossypium barbadense (Sea Island cotton), this protein is Photosystem II CP47 reaction center protein.